The following is a 522-amino-acid chain: Subtilisin-like protease 10 (522 aa).

A signal peptide spans 1–19 (MFFFKGVVAVLSFFSAVNA). A propeptide spanning residues 20 to 117 (APFMKPNNGT…VERDQIGTSQ (98 aa)) is cleaved from the precursor. In terms of domain architecture, Inhibitor I9 spans 36–113 (SYIVLLKRDI…HVAHVERDQI (78 aa)). A Peptidase S8 domain is found at 127–405 (NWGLGRLSNN…KLLVNGANGT (279 aa)). Catalysis depends on charge relay system residues D159 and H190. An N-linked (GlcNAc...) asparagine glycan is attached at N251. The active-site Charge relay system is S348. Polar residues predominate over residues 384-397 (ASVKNPGPNTTNKL). The disordered stretch occupies residues 384–515 (ASVKNPGPNT…GWNRPMWWNR (132 aa)). Residues N392 and N403 are each glycosylated (N-linked (GlcNAc...) asparagine). Positions 432 to 459 (SQNPPPGQNPPPGQNPPPEQPAPSPPAN) are enriched in pro residues.

This sequence belongs to the peptidase S8 family.

It is found in the secreted. Functionally, secreted subtilisin-like serine protease with keratinolytic activity that contributes to pathogenicity. This chain is Subtilisin-like protease 10 (SUB10), found in Arthroderma benhamiae (strain ATCC MYA-4681 / CBS 112371) (Trichophyton mentagrophytes).